A 410-amino-acid chain; its full sequence is Peptidase T-like protein YPO1009/y3403/YP_3421 (410 aa).

A Zn(2+)-binding site is contributed by H82. D84 is an active-site residue. D144 contacts Zn(2+). E176 functions as the Proton acceptor in the catalytic mechanism. Residues E177, D200, and H382 each contribute to the Zn(2+) site.

It belongs to the peptidase M20B family. Zn(2+) serves as cofactor.

In Yersinia pestis, this protein is Peptidase T-like protein YPO1009/y3403/YP_3421.